The following is a 467-amino-acid chain: Fumarate hydratase class II (467 aa).

Residues 98-100, arginine 126, 129-132, 139-141, and threonine 187 each bind substrate; these read SGT, HPND, and SSN. Catalysis depends on histidine 188, which acts as the Proton donor/acceptor. Serine 318 is an active-site residue. Residues serine 319 and 324–326 contribute to the substrate site; that span reads KVN.

The protein belongs to the class-II fumarase/aspartase family. Fumarase subfamily. As to quaternary structure, homotetramer.

The protein localises to the cytoplasm. The catalysed reaction is (S)-malate = fumarate + H2O. It functions in the pathway carbohydrate metabolism; tricarboxylic acid cycle; (S)-malate from fumarate: step 1/1. Its activity is regulated as follows. Inhibited by ATP, citrate and S-2,3-dicarboxyaziridine. Functionally, involved in the TCA cycle. FumC seems to be a backup enzyme for FumA under conditions of iron limitation and oxidative stress. Catalyzes the stereospecific interconversion of fumarate to L-malate. This Escherichia coli (strain K12) protein is Fumarate hydratase class II.